Reading from the N-terminus, the 1032-residue chain is Probable ATP-dependent RNA helicase DDX46 (1032 aa).

The span at 1-24 (MGRESRHYRKRSASRGRSGSRSRS) shows a compositional bias: basic residues. The disordered stretch occupies residues 1 to 227 (MGRESRHYRK…TEMEDEELDP (227 aa)). G2 carries the N-myristoyl glycine lipid modification. Positions 26 to 49 (SPSDKRSKRGDDRRSRSRDRDRRR) are enriched in basic and acidic residues. Basic residues-rich tracts occupy residues 50-73 (ERSR…RSRS) and 81-103 (ERRR…RRSR). The span at 112–200 (KKTENRSRSK…EMKQGKKWSL (89 aa)) shows a compositional bias: basic and acidic residues. Positions 152-197 (DQNKLEEEMRKRKERVEKWREEQRKKAMENIGELKKEIEEMKQGKK) form a coiled coil. K186 is covalently cross-linked (Glycyl lysine isopeptide (Lys-Gly) (interchain with G-Cter in SUMO2)). Position 199 is a phosphoserine (S199). Over residues 201–211 (EDDDDDEDDPA) the composition is skewed to acidic residues. Position 263 is an N6-acetyllysine (K263). Y294 carries the post-translational modification Phosphotyrosine. Residues S295 and S296 each carry the phosphoserine modification. K325 participates in a covalent cross-link: Glycyl lysine isopeptide (Lys-Gly) (interchain with G-Cter in SUMO2). S346 is subject to Phosphoserine. Residues 372–400 (KSWVQCGISMKILNSLKKHGYEKPTPIQT) carry the Q motif motif. Residues 403–581 (IPAIMSGRDL…RRILSKPIEV (179 aa)) enclose the Helicase ATP-binding domain. Residue 416–423 (AKTGSGKT) coordinates ATP. The short motif at 529–532 (DEAD) is the DEAD box element. One can recognise a Helicase C-terminal domain in the interval 592–753 (DVEQQVIVIE…AVPPDLEKLW (162 aa)). Residue K776 is modified to N6-acetyllysine. K779 participates in a covalent cross-link: Glycyl lysine isopeptide (Lys-Gly) (interchain with G-Cter in SUMO2). The residue at position 804 (S804) is a Phosphoserine. N6-acetyllysine is present on K904. Glycyl lysine isopeptide (Lys-Gly) (interchain with G-Cter in SUMO2) cross-links involve residues K908 and K916. S929 is modified (phosphoserine).

Belongs to the DEAD box helicase family. DDX46/PRP5 subfamily. As to quaternary structure, component of the 17S U2 SnRNP complex, a ribonucleoprotein complex that contains small nuclear RNA (snRNA) U2 and a number of specific proteins. Within the 17S U2 SnRNP complex, DDX46 is part of the SF3B subcomplex, which is required for 'A' complex assembly formed by the stable binding of U2 snRNP to the branchpoint sequence in pre-mRNA. Recruited to the 17S U2 SnRNP complex following release of DDX42; DDX42 and DDX46 bind the SF3B subcomplex in a competitive manner.

The protein resides in the nucleus speckle. It localises to the nucleus. Its subcellular location is the cajal body. It carries out the reaction ATP + H2O = ADP + phosphate + H(+). Component of the 17S U2 SnRNP complex of the spliceosome, a large ribonucleoprotein complex that removes introns from transcribed pre-mRNAs. The 17S U2 SnRNP complex (1) directly participates in early spliceosome assembly and (2) mediates recognition of the intron branch site during pre-mRNA splicing by promoting the selection of the pre-mRNA branch-site adenosine, the nucleophile for the first step of splicing. Within the 17S U2 SnRNP complex, DDX46 plays essential roles during assembly of pre-spliceosome and proofreading of the branch site. This is Probable ATP-dependent RNA helicase DDX46 (Ddx46) from Mus musculus (Mouse).